Reading from the N-terminus, the 194-residue chain is Fe/S biogenesis protein NfuA (194 aa).

[4Fe-4S] cluster-binding residues include Cys-151 and Cys-154.

It belongs to the NfuA family. As to quaternary structure, homodimer. The cofactor is [4Fe-4S] cluster.

Functionally, involved in iron-sulfur cluster biogenesis. Binds a 4Fe-4S cluster, can transfer this cluster to apoproteins, and thereby intervenes in the maturation of Fe/S proteins. Could also act as a scaffold/chaperone for damaged Fe/S proteins. This chain is Fe/S biogenesis protein NfuA, found in Vibrio vulnificus (strain CMCP6).